Consider the following 356-residue polypeptide: Glucose 1-dehydrogenase (356 aa).

The disordered stretch occupies residues 1–26; the sequence is MDAIVVSKADRTPRLVDRPRPDPTPG. The span at 8-21 shows a compositional bias: basic and acidic residues; that stretch reads KADRTPRLVDRPRP. Aspartate 38 serves as a coordination point for Zn(2+). Threonine 40 serves as a coordination point for substrate. Residues histidine 63 and glutamate 64 each contribute to the Zn(2+) site. The interval 86 to 107 is disordered; sequence TVRRPRGDPTPQFDRGQPDMAA. Residues glutamate 113 and glutamate 149 each contribute to the substrate site. Glutamate 149 provides a ligand contact to Zn(2+). Residues 180 to 183, 205 to 206, 270 to 272, and 300 to 302 each bind NADP(+); these read NGSL, RR, LGV, and SVN. A substrate-binding site is contributed by asparagine 302.

The protein belongs to the zinc-containing alcohol dehydrogenase family. Glucose 1-dehydrogenase subfamily. Zn(2+) serves as cofactor.

It catalyses the reaction D-glucose + NAD(+) = D-glucono-1,5-lactone + NADH + H(+). The catalysed reaction is D-glucose + NADP(+) = D-glucono-1,5-lactone + NADPH + H(+). Functionally, catalyzes the NAD(P)(+)-dependent oxidation of D-glucose to D-gluconate via gluconolactone. Can utilize both NAD(+) and NADP(+) as electron acceptor. Is involved in the degradation of glucose through a modified Entner-Doudoroff pathway. This Halobacterium salinarum (strain ATCC 700922 / JCM 11081 / NRC-1) (Halobacterium halobium) protein is Glucose 1-dehydrogenase.